Consider the following 432-residue polypeptide: Polyamine export protein (432 aa).

Residues 1–201 (MIMELFHTIL…AEAGVLKTQE (201 aa)) enclose the CNNM transmembrane domain. The next 4 membrane-spanning stretches (helical) occupy residues 2–22 (IMEL…SAVV), 61–81 (FITV…GIGE), 100–120 (WIAP…FILF), and 138–158 (LSVV…VWFF). CBS domains follow at residues 220-279 (MTTR…NENV) and 286-345 (LLRK…SNEE).

Belongs to the UPF0053 family. PaeA subfamily.

It localises to the cell inner membrane. Functionally, involved in cadaverine and putrescine tolerance in stationary phase. May facilitate the efflux of both cadaverine and putrescine from the cytoplasm, reducing potentially toxic levels under certain stress conditions. The sequence is that of Polyamine export protein from Haemophilus influenzae (strain ATCC 51907 / DSM 11121 / KW20 / Rd).